We begin with the raw amino-acid sequence, 974 residues long: Mediator of RNA polymerase II transcription subunit 16 (974 aa).

The tract at residues 62–92 (ESSSTLSTHSTTTSVNGSTTAGVGSTPNFGG) is disordered. A compositionally biased stretch (low complexity) spans 63–75 (SSSTLSTHSTTTS). Over residues 76 to 92 (VNGSTTAGVGSTPNFGG) the composition is skewed to polar residues. A Nuclear localization signal motif is present at residues 889–893 (KLPIK).

This sequence belongs to the Mediator complex subunit 16 family. As to quaternary structure, component of the Mediator complex, which is composed of at least 21 subunits that form three structurally distinct submodules. The Mediator head module contains MED6, MED8, MED11, SRB4/MED17, SRB5/MED18, ROX3/MED19, SRB2/MED20 and SRB6/MED22, the middle module contains MED1, MED4, NUT1/MED5, MED7, CSE2/MED9, NUT2/MED10, SRB7/MED21 and SOH1/MED31, and the tail module contains MED2, PGD1/MED3, RGR1/MED14, GAL11/MED15 and SIN4/MED16. The head and the middle modules interact directly with RNA polymerase II, whereas the elongated tail module interacts with gene-specific regulatory proteins. Interacts with HOG1. Phosphorylated by KIN28.

It is found in the nucleus. In terms of biological role, component of the Mediator complex, a coactivator involved in the regulated transcription of nearly all RNA polymerase II-dependent genes. Mediator functions as a bridge to convey information from gene-specific regulatory proteins to the basal RNA polymerase II transcription machinery. The Mediator complex, having a compact conformation in its free form, is recruited to promoters by direct interactions with regulatory proteins and serves for the assembly of a functional preinitiation complex with RNA polymerase II and the general transcription factors. The Mediator complex unfolds to an extended conformation and partially surrounds RNA polymerase II, specifically interacting with the unphosphorylated form of the C-terminal domain (CTD) of RNA polymerase II. The Mediator complex dissociates from the RNA polymerase II holoenzyme and stays at the promoter when transcriptional elongation begins. The chain is Mediator of RNA polymerase II transcription subunit 16 (SIN4) from Saccharomyces cerevisiae (strain ATCC 204508 / S288c) (Baker's yeast).